Consider the following 65-residue polypeptide: Large ribosomal subunit protein uL29 (65 aa).

Belongs to the universal ribosomal protein uL29 family.

This Hyphomonas neptunium (strain ATCC 15444) protein is Large ribosomal subunit protein uL29.